We begin with the raw amino-acid sequence, 196 residues long: Adenylate kinase (196 aa).

9 to 17 is an ATP binding site; that stretch reads GIPGVGKST.

This sequence belongs to the archaeal adenylate kinase family.

It is found in the cytoplasm. It carries out the reaction AMP + ATP = 2 ADP. In Thermococcus sibiricus (strain DSM 12597 / MM 739), this protein is Adenylate kinase.